Here is a 600-residue protein sequence, read N- to C-terminus: MRVTTSFPLGTLRDTPSEAEIISHQLLLKGGYIRRVNSGIYAYMPIMLKVIEKISNIIEKELNNNGCSKLLLPQLHPAELWKRSERWEGYTAGEGIMFNLKDRQGKEFGLAPTHEEVITNIASEIINSYKQLPLCFYQIQTKFRDEIRPRFGLMRSREFIMKDGYSFHSSKEDLSSFYEKMERSYENIFKNCGLDTVGVDADSGAIGGAASKEFMVTADAGEDYILFTESGSYAANIEKAISLPSKEIPLKSFETEWLETPNQKSIVDICKENDLDASQIVKVVIFVAKFENKSQLPILTCIRGDQHINEIKLFNLISKKYSSNLISLEIIEDNATIEKNLTNFPLGYIGPDINDEVIKNSSSWDKSWIRIADHSANNLSSFVSGSNKVNFHKVFQTFSFIDNQFLISDIRNAKKGDRISLESNEELKEKRGIEIGHIFQLGQKYSEKLNAKFSDKDGKLKNLWMGCYGIGVTRIAQAAIEQNHDENGISWPIQISPFEILIIPTNLKDPYQTKLTEEIYKEFESKKIDVLLDDRDVRAGVKFKDADLIGIPFQIIIGRDSINKEVEFICRSSKRKIKISSQNLLEKFISESKILYNENS.

The protein belongs to the class-II aminoacyl-tRNA synthetase family. ProS type 1 subfamily. In terms of assembly, homodimer.

It is found in the cytoplasm. It carries out the reaction tRNA(Pro) + L-proline + ATP = L-prolyl-tRNA(Pro) + AMP + diphosphate. In terms of biological role, catalyzes the attachment of proline to tRNA(Pro) in a two-step reaction: proline is first activated by ATP to form Pro-AMP and then transferred to the acceptor end of tRNA(Pro). As ProRS can inadvertently accommodate and process non-cognate amino acids such as alanine and cysteine, to avoid such errors it has two additional distinct editing activities against alanine. One activity is designated as 'pretransfer' editing and involves the tRNA(Pro)-independent hydrolysis of activated Ala-AMP. The other activity is designated 'posttransfer' editing and involves deacylation of mischarged Ala-tRNA(Pro). The misacylated Cys-tRNA(Pro) is not edited by ProRS. The protein is Proline--tRNA ligase of Prochlorococcus marinus (strain MIT 9515).